Reading from the N-terminus, the 388-residue chain is Staphopain A (388 aa).

The first 25 residues, 1–25 (MKRNFPKLIALSLIFSLSVTPIANA), serve as a signal peptide directing secretion. A propeptide spanning residues 26-214 (ESNSNIKAKD…TSQFKSNNYT (189 aa)) is cleaved from the precursor. Catalysis depends on residues Cys-238, His-334, and Asn-355.

It belongs to the peptidase C47 family. As to quaternary structure, in the cytoplasm, prematurely activated/folded ScpA forms a stable non-covalent complex with ScpB. Cleavage leads to the activation of ScpA probably by an auto-catalytic manner.

It localises to the secreted. The catalysed reaction is Broad endopeptidase action on proteins including elastin, but rather limited hydrolysis of small-molecule substrates. Assays are conveniently made with hemoglobin, casein or Z-Phe-Arg-NHMec as substrate.. With respect to regulation, prematurely activated/folded staphopain A is inhibited by staphostatin A (ScpB), which is probably required to protect staphylococcal cytoplasmic proteins from degradation by ScpA. Its function is as follows. Cysteine protease that plays an important role in the inhibition of host innate immune response. Cleaves host elastins found in connective tissues, pulmonary surfactant protein A in the lungs, and the chemokine receptor CXCR2 on leukocytes. Proteolytic cleavage of surfactant protein A impairs bacterial phagocytosis by neutrophils while CXCR2 degradation blocks neutrophil activation and chemotaxis. Additionally, promotes vascular leakage by activating the plasma kallikerin/kinin system, resulting in hypotension. The chain is Staphopain A (sspP) from Staphylococcus aureus (strain COL).